Consider the following 284-residue polypeptide: 2-dehydro-3-deoxyphosphooctonate aldolase (284 aa).

The protein belongs to the KdsA family.

It is found in the cytoplasm. It carries out the reaction D-arabinose 5-phosphate + phosphoenolpyruvate + H2O = 3-deoxy-alpha-D-manno-2-octulosonate-8-phosphate + phosphate. It participates in carbohydrate biosynthesis; 3-deoxy-D-manno-octulosonate biosynthesis; 3-deoxy-D-manno-octulosonate from D-ribulose 5-phosphate: step 2/3. Its pathway is bacterial outer membrane biogenesis; lipopolysaccharide biosynthesis. The polypeptide is 2-dehydro-3-deoxyphosphooctonate aldolase (Methylobacterium radiotolerans (strain ATCC 27329 / DSM 1819 / JCM 2831 / NBRC 15690 / NCIMB 10815 / 0-1)).